The sequence spans 229 residues: Non-structural protein V (229 aa).

2 stretches are compositionally biased toward polar residues: residues 30-46 and 82-112; these read ATSQ…SSRT and GRQN…LPSP. A disordered region spans residues 30–112; sequence ATSQSSLNKP…MGSDTQLPSP (83 aa). The Zn(2+) site is built by histidine 178, cysteine 197, cysteine 201, cysteine 213, cysteine 215, cysteine 218, cysteine 222, and cysteine 225.

It belongs to the paramyxoviruses V protein family.

Functionally, blocks host interferon signaling. This is Non-structural protein V (P/V) from Homo sapiens (Human).